The primary structure comprises 88 residues: MRAAFWVGCAALLLSACSSEPVQQATAAHVAPGLKASMSSSGEANCAMIGGSLSVARQLDGTAIGMCALPNGKRCSEQSLAAGSCGSY.

Residues 1-25 (MRAAFWVGCAALLLSACSSEPVQQA) form the signal peptide.

This is an uncharacterized protein from Escherichia coli O6:H1 (strain CFT073 / ATCC 700928 / UPEC).